Consider the following 280-residue polypeptide: Probable endonuclease 4 (280 aa).

Residues His-69, His-109, Glu-145, Asp-179, His-182, His-216, Asp-229, His-231, and Glu-261 each coordinate Zn(2+).

Belongs to the AP endonuclease 2 family. Zn(2+) serves as cofactor.

The enzyme catalyses Endonucleolytic cleavage to 5'-phosphooligonucleotide end-products.. Its function is as follows. Endonuclease IV plays a role in DNA repair. It cleaves phosphodiester bonds at apurinic or apyrimidinic (AP) sites, generating a 3'-hydroxyl group and a 5'-terminal sugar phosphate. The polypeptide is Probable endonuclease 4 (Erwinia tasmaniensis (strain DSM 17950 / CFBP 7177 / CIP 109463 / NCPPB 4357 / Et1/99)).